The chain runs to 285 residues: 4-hydroxybenzoate octaprenyltransferase (285 aa).

7 helical membrane passes run 20 to 37 (IGIYLVLWPALWALWLAA), 96 to 116 (FFFVLCLLAFGLVLFLNPFTI), 138 to 158 (WPQAFLGAAFAWAIPMAFAAI), 166 to 186 (AWVIFGVTLVWALVYDTAYAV), 211 to 231 (IIGFFQAIMLLGFLWIGDLFG), 234 to 254 (WLYYGSVLIAAGFFVYHQYLL), and 262 to 282 (AFKAFLNNHWVGLVILIGIML).

It belongs to the UbiA prenyltransferase family. Mg(2+) serves as cofactor.

It localises to the cell inner membrane. It catalyses the reaction all-trans-octaprenyl diphosphate + 4-hydroxybenzoate = 4-hydroxy-3-(all-trans-octaprenyl)benzoate + diphosphate. It functions in the pathway cofactor biosynthesis; ubiquinone biosynthesis. Its function is as follows. Catalyzes the prenylation of para-hydroxybenzoate (PHB) with an all-trans polyprenyl group. Mediates the second step in the final reaction sequence of ubiquinone-8 (UQ-8) biosynthesis, which is the condensation of the polyisoprenoid side chain with PHB, generating the first membrane-bound Q intermediate 3-octaprenyl-4-hydroxybenzoate. The sequence is that of 4-hydroxybenzoate octaprenyltransferase from Hydrogenovibrio crunogenus (strain DSM 25203 / XCL-2) (Thiomicrospira crunogena).